Reading from the N-terminus, the 311-residue chain is tRNA dimethylallyltransferase (311 aa).

10-17 (GPTAVGKS) serves as a coordination point for ATP. 12–17 (TAVGKS) is a substrate binding site. An interaction with substrate tRNA region spans residues 35–38 (DSMQ).

The protein belongs to the IPP transferase family. As to quaternary structure, monomer. It depends on Mg(2+) as a cofactor.

It catalyses the reaction adenosine(37) in tRNA + dimethylallyl diphosphate = N(6)-dimethylallyladenosine(37) in tRNA + diphosphate. In terms of biological role, catalyzes the transfer of a dimethylallyl group onto the adenine at position 37 in tRNAs that read codons beginning with uridine, leading to the formation of N6-(dimethylallyl)adenosine (i(6)A). This is tRNA dimethylallyltransferase from Carboxydothermus hydrogenoformans (strain ATCC BAA-161 / DSM 6008 / Z-2901).